Consider the following 370-residue polypeptide: tRNA-specific 2-thiouridylase MnmA (370 aa).

ATP contacts are provided by residues G9 to S16 and M35. The segment at N95–D97 is interaction with target base in tRNA. C100 serves as the catalytic Nucleophile. The cysteines at positions 100 and 198 are disulfide-linked. An ATP-binding site is contributed by G124. Residues K148–Q150 are interaction with tRNA. C198 serves as the catalytic Cysteine persulfide intermediate. The interaction with tRNA stretch occupies residues R316–Y317.

The protein belongs to the MnmA/TRMU family.

Its subcellular location is the cytoplasm. It catalyses the reaction S-sulfanyl-L-cysteinyl-[protein] + uridine(34) in tRNA + AH2 + ATP = 2-thiouridine(34) in tRNA + L-cysteinyl-[protein] + A + AMP + diphosphate + H(+). In terms of biological role, catalyzes the 2-thiolation of uridine at the wobble position (U34) of tRNA, leading to the formation of s(2)U34. The protein is tRNA-specific 2-thiouridylase MnmA of Acidovorax ebreus (strain TPSY) (Diaphorobacter sp. (strain TPSY)).